The sequence spans 295 residues: Bifunctional protein FolD (295 aa).

NADP(+)-binding positions include 165-167, serine 190, and isoleucine 231; that span reads GRS.

The protein belongs to the tetrahydrofolate dehydrogenase/cyclohydrolase family. Homodimer.

It catalyses the reaction (6R)-5,10-methylene-5,6,7,8-tetrahydrofolate + NADP(+) = (6R)-5,10-methenyltetrahydrofolate + NADPH. It carries out the reaction (6R)-5,10-methenyltetrahydrofolate + H2O = (6R)-10-formyltetrahydrofolate + H(+). Its pathway is one-carbon metabolism; tetrahydrofolate interconversion. Functionally, catalyzes the oxidation of 5,10-methylenetetrahydrofolate to 5,10-methenyltetrahydrofolate and then the hydrolysis of 5,10-methenyltetrahydrofolate to 10-formyltetrahydrofolate. The chain is Bifunctional protein FolD from Nitrosomonas europaea (strain ATCC 19718 / CIP 103999 / KCTC 2705 / NBRC 14298).